Reading from the N-terminus, the 328-residue chain is Beta-ketoacyl-[acyl-carrier-protein] synthase III (328 aa).

Active-site residues include cysteine 113 and histidine 253. The ACP-binding stretch occupies residues 254-258 (QANLR). Asparagine 283 is an active-site residue.

It belongs to the thiolase-like superfamily. FabH family. Homodimer.

The protein localises to the cytoplasm. It carries out the reaction malonyl-[ACP] + acetyl-CoA + H(+) = 3-oxobutanoyl-[ACP] + CO2 + CoA. Its pathway is lipid metabolism; fatty acid biosynthesis. Its function is as follows. Catalyzes the condensation reaction of fatty acid synthesis by the addition to an acyl acceptor of two carbons from malonyl-ACP. Catalyzes the first condensation reaction which initiates fatty acid synthesis and may therefore play a role in governing the total rate of fatty acid production. Possesses both acetoacetyl-ACP synthase and acetyl transacylase activities. Its substrate specificity determines the biosynthesis of branched-chain and/or straight-chain of fatty acids. The polypeptide is Beta-ketoacyl-[acyl-carrier-protein] synthase III (Fusobacterium nucleatum subsp. nucleatum (strain ATCC 25586 / DSM 15643 / BCRC 10681 / CIP 101130 / JCM 8532 / KCTC 2640 / LMG 13131 / VPI 4355)).